The primary structure comprises 106 residues: UPF0213 protein VPA1222 (106 aa).

One can recognise a GIY-YIG domain in the interval 7 to 82 (QHWSVYLIRN…KQLTKSKKEQ (76 aa)).

The protein belongs to the UPF0213 family.

This is UPF0213 protein VPA1222 from Vibrio parahaemolyticus serotype O3:K6 (strain RIMD 2210633).